Consider the following 158-residue polypeptide: Small ribosomal subunit protein bS6 (158 aa).

Residues 92-149 (RVDEHEEGPSAMMRKADRDRERDDRGPREGGFRGDREGRGDRDGFRGDRGPRRPREDA) show a composition bias toward basic and acidic residues. The segment at 92 to 158 (RVDEHEEGPS…ADAPAAAVEE (67 aa)) is disordered.

The protein belongs to the bacterial ribosomal protein bS6 family.

In terms of biological role, binds together with bS18 to 16S ribosomal RNA. The chain is Small ribosomal subunit protein bS6 from Rhodopseudomonas palustris (strain ATCC BAA-98 / CGA009).